A 328-amino-acid polypeptide reads, in one-letter code: Nicotianamine synthase 1 (328 aa).

Belongs to the nicotianamine synthase (NAS)-like family. As to expression, in roots but not in leaves.

It carries out the reaction 3 S-adenosyl-L-methionine = nicotianamine + 3 S-methyl-5'-thioadenosine + 3 H(+). In terms of biological role, synthesizes nicotianamine, a polyamine that is the first intermediate in the synthesis of the phytosiderophores of the mugineic acid type found in gramineae which serves as a sensor for the physiological iron status within the plant, and/or might be involved in the transport of iron. The protein is Nicotianamine synthase 1 (NAS1) of Hordeum vulgare (Barley).